Reading from the N-terminus, the 605-residue chain is ATP-dependent RNA helicase DBP3 (605 aa).

A disordered region spans residues 1-124 (MSAEELVASP…TPALSKKQQK (124 aa)). Positions 54–66 (KDKKDKKEKKDKK) are enriched in basic residues. Positions 104–114 (PVSTATPTESE) are enriched in polar residues. The short motif at 175–201 (LSIRDLPINSKLQPFLNKFEKPTPIQA) is the Q motif element. One can recognise a Helicase ATP-binding domain in the interval 204–391 (WPALLSKKDV…STFLNNPLRI (188 aa)). ATP is bound at residue 217–224 (AETGSGKT). The short motif at 336-339 (DEAD) is the DEAD box element. In terms of domain architecture, Helicase C-terminal spans 424–575 (HLKAHLKVHP…EIPKEMDRFP (152 aa)).

Belongs to the DEAD box helicase family. DDX5/DBP2 subfamily.

Its subcellular location is the nucleus. It is found in the nucleolus. It catalyses the reaction ATP + H2O = ADP + phosphate + H(+). In terms of biological role, ATP-dependent RNA helicase required for 60S ribosomal subunit synthesis. Involved in efficient pre-rRNA processing, predominantly at site A3, which is necessary for the normal formation of 25S and 5.8S rRNAs. The chain is ATP-dependent RNA helicase DBP3 (DBP3) from Cryptococcus neoformans var. neoformans serotype D (strain JEC21 / ATCC MYA-565) (Filobasidiella neoformans).